The following is a 273-amino-acid chain: Protein BMH2 (273 aa).

Serine 2 bears the N-acetylserine mark. Positions 236–273 (DISESGQEDQQQQQQQQQQQQQQQQQAPAEQTQGEPTK) are disordered. A compositionally biased stretch (low complexity) spans 245-261 (QQQQQQQQQQQQQQQQQ). Positions 262–273 (APAEQTQGEPTK) are enriched in polar residues.

The protein belongs to the 14-3-3 family. In terms of assembly, interacts with NTH1 (via N-terminus when phosphorylated by PKA); the interaction is direct and activates NTH1. Interacts with FIN1.

It is found in the cytoplasm. The protein localises to the nucleus. This Saccharomyces cerevisiae (strain ATCC 204508 / S288c) (Baker's yeast) protein is Protein BMH2 (BMH2).